The following is a 181-amino-acid chain: Mitochondrial pyruvate carrier-like protein (181 aa).

2 helical membrane-spanning segments follow: residues 23-42 (YLASTHFWGPVANWGLPLAA) and 52-74 (IISGRMTTALIFYSMAFMRFAYR). Residues 125 to 154 (TGSVDSSATSTGSVDSSATSTGSVDSSAAT) are disordered.

It belongs to the mitochondrial pyruvate carrier (MPC) (TC 2.A.105) family.

Its subcellular location is the mitochondrion inner membrane. Its function is as follows. May mediate the uptake of pyruvate into mitochondria. This chain is Mitochondrial pyruvate carrier-like protein, found in Bos taurus (Bovine).